A 381-amino-acid chain; its full sequence is Chaperone protein DnaJ (381 aa).

Positions 5 to 70 constitute a J domain; it reads DFYEVLGVSR…QKKAAYDQYG (66 aa). Residues 136-214 form a CR-type zinc finger; the sequence is GVSKEIEVPT…CHGQGRKQKT (79 aa). 8 residues coordinate Zn(2+): cysteine 149, cysteine 152, cysteine 166, cysteine 169, cysteine 188, cysteine 191, cysteine 202, and cysteine 205. 4 CXXCXGXG motif repeats span residues 149 to 156, 166 to 173, 188 to 195, and 202 to 209; these read CDTCEGTG, CGTCHGHG, CPTCHGKG, and CNVCHGQG.

The protein belongs to the DnaJ family. As to quaternary structure, homodimer. Requires Zn(2+) as cofactor.

It localises to the cytoplasm. In terms of biological role, participates actively in the response to hyperosmotic and heat shock by preventing the aggregation of stress-denatured proteins and by disaggregating proteins, also in an autonomous, DnaK-independent fashion. Unfolded proteins bind initially to DnaJ; upon interaction with the DnaJ-bound protein, DnaK hydrolyzes its bound ATP, resulting in the formation of a stable complex. GrpE releases ADP from DnaK; ATP binding to DnaK triggers the release of the substrate protein, thus completing the reaction cycle. Several rounds of ATP-dependent interactions between DnaJ, DnaK and GrpE are required for fully efficient folding. Also involved, together with DnaK and GrpE, in the DNA replication of plasmids through activation of initiation proteins. In Vibrio vulnificus (strain CMCP6), this protein is Chaperone protein DnaJ.